The primary structure comprises 1323 residues: PH domain leucine-rich repeat-containing protein phosphatase 2 (1323 aa).

Positions 150–248 (RILLSGIYNV…WQRQASKVVS (99 aa)) constitute a PH domain. LRR repeat units lie at residues 250 to 271 (RISTVDLSCYSLEEVPEHLFYS), 273 to 296 (DITYLNLRHNFMQLERPGGLDTLY), 300 to 321 (QLKGLNLSHNKLGLFPILLCEI), 323 to 344 (TLTELNLSCNGFHDLPSQIGNL), 346 to 368 (NLQTLCLDGNFLTTLPEELGNLQ), 369 to 390 (QLSSLGISFNNFSQIPEVYEKL), 392 to 412 (MLDRVVMAGNCLEVLNLGVLN), 416 to 439 (HIKHVDLRMNHLKTMVIENLEGNK), 440 to 460 (HITHVDLRDNRLTDLDLSSLC), 461 to 480 (SLEQLHCGRNQLRELTLSGF), 481 to 502 (SLRTLYASSNRLTAVNVYPVPS), 503 to 524 (LLTFLDLSRNLLECVPDWACEA), 526 to 547 (KIEVLDVSYNLLTEVPVRILSS), 549 to 570 (SLRKLMLGHNHVQNLPTLVEHI), 571 to 592 (PLEVLDLQHNALTRLPDTLFSK), 595 to 616 (NLRYLNASANSLESLPSACTGE), 621 to 644 (MLQLLYLTNNLLTDQCIPVLVGHL), 645 to 666 (HLRILHLANNQLQTFPASKLNK), 669 to 690 (QLEELNLSGNKLKTIPTTIANC), 692 to 713 (RLHTLVAHSNNISIFPEILQLP), 714 to 735 (QIQFVDLSCNDLTEILIPEALP), and 737 to 758 (TLQDLDLTGNTNLVLEHKTLDI). The PPM-type phosphatase domain maps to 785-1033 (SHGLAEMAGQ…DNVGAMVVYL (249 aa)). Positions 820, 821, 985, and 1024 each coordinate Mn(2+). Residues 1060–1157 (TIKDAPKPAT…DSDDDQPVEG (98 aa)) are disordered. Low complexity predominate over residues 1071–1097 (SSSSGIASEFSSEMSTSEVSSEVGSTA). Residues 1122–1146 (PTPTSGLFQRQPSSATFSSNQSDNG) show a composition bias toward polar residues. Phosphoserine is present on serine 1210. The interval 1285 to 1323 (HDLEEEVKEQMKQHQDSRLEPEPHEEDRTEPPEEFDTAL) is disordered. Residues 1292–1315 (KEQMKQHQDSRLEPEPHEEDRTEP) are compositionally biased toward basic and acidic residues.

Interacts with AKT1, AKT3 and PRKCB isoform beta-II. Interacts with STK4, RPS6KB1, RAF1. Interacts with FKBP5; FKBP5 acts as a scaffold for PHLPP2 and Akt. Interacts with NHERF1; NHERF1 scaffolds a heterotrimeric complex with PTEN. Mn(2+) is required as a cofactor. As to expression, in colorectal cancer tissue, expression is highest in the surface epithelium of normal colonic mucosa adjacent to the cancer tissue but is largely excluded from the crypt bases. Expression is lost or significantly decreased in 80% of tested tumors (at protein level).

It is found in the cytoplasm. The protein resides in the membrane. It localises to the nucleus. The enzyme catalyses O-phospho-L-seryl-[protein] + H2O = L-seryl-[protein] + phosphate. It catalyses the reaction O-phospho-L-threonyl-[protein] + H2O = L-threonyl-[protein] + phosphate. With respect to regulation, inhibited by AKT1, AKT2 and AKT3. Activated by oleic acid and arachidonic acid. Its function is as follows. Protein phosphatase involved in regulation of Akt and PKC signaling. Mediates dephosphorylation in the C-terminal domain hydrophobic motif of members of the AGC Ser/Thr protein kinase family; specifically acts on 'Ser-473' of AKT1, 'Ser-660' of PRKCB isoform beta-II and 'Ser-657' of PRKCA. Akt regulates the balance between cell survival and apoptosis through a cascade that primarily alters the function of transcription factors that regulate pro- and antiapoptotic genes. Dephosphorylation of 'Ser-473' of Akt triggers apoptosis and decreases cell proliferation. Also controls the phosphorylation of AKT3. Dephosphorylates STK4 on 'Thr-387' leading to STK4 activation and apoptosis. Dephosphorylates RPS6KB1 and is involved in regulation of cap-dependent translation. Inhibits cancer cell proliferation and may act as a tumor suppressor. Dephosphorylation of PRKCA and PRKCB leads to their destabilization and degradation. Dephosphorylates RAF1 inhibiting its kinase activity. The protein is PH domain leucine-rich repeat-containing protein phosphatase 2 (PHLPP2) of Homo sapiens (Human).